Consider the following 218-residue polypeptide: Attacin-B (218 aa).

Positions 1 to 17 (MQKTSILILALFAIAEA) are cleaved as a signal peptide. Positions 18–28 (VPTTGPIRVRR) are excised as a propeptide.

This sequence belongs to the attacin/sarcotoxin-2 family. Hemolymph (at protein level).

It is found in the secreted. Functionally, hemolymph antibacterial protein. The protein is Attacin-B (AttB) of Drosophila melanogaster (Fruit fly).